A 256-amino-acid chain; its full sequence is Small ribosomal subunit protein bS18m (256 aa).

The disordered stretch occupies residues 19-106 (GQRTAQFSTT…GGQRYGSNSQ (88 aa)). The span at 21 to 30 (RTAQFSTTSP) shows a compositional bias: polar residues. Residues 44-66 (NAPRTNTNTSSPSSNNNNNAGSS) are compositionally biased toward low complexity.

Belongs to the bacterial ribosomal protein bS18 family. In terms of assembly, component of the mitochondrial small ribosomal subunit (mt-SSU). Mature N.crassa 74S mitochondrial ribosomes consist of a small (37S) and a large (54S) subunit. The 37S small subunit contains a 16S ribosomal RNA (16S mt-rRNA) and 32 different proteins. The 54S large subunit contains a 23S rRNA (23S mt-rRNA) and 42 different proteins.

The protein resides in the mitochondrion. Its function is as follows. Component of the mitochondrial ribosome (mitoribosome), a dedicated translation machinery responsible for the synthesis of mitochondrial genome-encoded proteins, including at least some of the essential transmembrane subunits of the mitochondrial respiratory chain. The mitoribosomes are attached to the mitochondrial inner membrane and translation products are cotranslationally integrated into the membrane. The sequence is that of Small ribosomal subunit protein bS18m (rsm18) from Neurospora crassa (strain ATCC 24698 / 74-OR23-1A / CBS 708.71 / DSM 1257 / FGSC 987).